Here is a 268-residue protein sequence, read N- to C-terminus: Glutamate racemase (268 aa).

Residues 14–15 (DS) and 46–47 (YG) each bind substrate. Cys-78 serves as the catalytic Proton donor/acceptor. 79–80 (NS) contacts substrate. Catalysis depends on Cys-190, which acts as the Proton donor/acceptor. Substrate is bound at residue 191–192 (TH).

This sequence belongs to the aspartate/glutamate racemases family.

It catalyses the reaction L-glutamate = D-glutamate. Its pathway is cell wall biogenesis; peptidoglycan biosynthesis. Its function is as follows. Provides the (R)-glutamate required for cell wall biosynthesis. The protein is Glutamate racemase of Treponema pallidum (strain Nichols).